Reading from the N-terminus, the 334-residue chain is Dihydroorotate dehydrogenase (quinone) (334 aa).

FMN-binding positions include 59–63 (AGLDK) and Thr-83. Lys-63 is a substrate binding site. 108–112 (NRMGF) provides a ligand contact to substrate. FMN-binding residues include Asn-136 and Asn-169. Asn-169 is a substrate binding site. The Nucleophile role is filled by Ser-172. Substrate is bound at residue Asn-174. Positions 214 and 242 each coordinate FMN. 243-244 (NT) contacts substrate. Residues Gly-265, Gly-294, and 315-316 (YS) contribute to the FMN site.

The protein belongs to the dihydroorotate dehydrogenase family. Type 2 subfamily. In terms of assembly, monomer. FMN serves as cofactor.

It is found in the cell membrane. The catalysed reaction is (S)-dihydroorotate + a quinone = orotate + a quinol. The protein operates within pyrimidine metabolism; UMP biosynthesis via de novo pathway; orotate from (S)-dihydroorotate (quinone route): step 1/1. Functionally, catalyzes the conversion of dihydroorotate to orotate with quinone as electron acceptor. The polypeptide is Dihydroorotate dehydrogenase (quinone) (Acinetobacter baumannii (strain AB0057)).